The sequence spans 357 residues: Glucose-6-phosphatase catalytic subunit 1 (357 aa).

Residues 1 to 28 (MEKGMDVLHDFGIQSTHYLQVNYQDSQD) lie on the Lumenal side of the membrane. The helical transmembrane segment at 29–49 (WFILVSVIADLRNAFYVLFPI) threads the bilayer. Residues 50–60 (WFHLREAVGIK) are Cytoplasmic-facing. Residues 61–81 (LLWVAVIGDWLNLVFKWILFG) traverse the membrane as a helical segment. At 82–117 (QRPYWWVMDTDYYSNTSVPLIKQFPVTCETGPGSPS) the chain is on the lumenal side. A substrate-binding site is contributed by Arg83. Asn96 carries N-linked (GlcNAc...) asparagine glycosylation. The chain crosses the membrane as a helical span at residues 118 to 138 (GHAMGTAGVYYVMVTSTLSIF). His119 acts as the Proton donor in catalysis. Topologically, residues 139-147 (RGRKRPTYR) are cytoplasmic. The chain crosses the membrane as a helical span at residues 148-168 (FRCLNILLWLGFWAVQLNVCL). Residues 169 to 170 (SR) lie on the Lumenal side of the membrane. Arg170 contributes to the substrate binding site. Residues 171–191 (IYLAAHFPHQVVAGVLSGIAV) form a helical membrane-spanning segment. The active-site Nucleophile is the His176. The Cytoplasmic portion of the chain corresponds to 192-209 (AETFRHIQSIYNASLKKY). Residues 210–230 (FLITFFLFSFAIGFYLLLKGL) traverse the membrane as a helical segment. Residues 231 to 254 (GVDLLWTLEKARRWCERPEWVHID) are Lumenal-facing. A helical membrane pass occupies residues 255 to 275 (TTPFASLLKNVGTLFGLGVTL). Residues 276-291 (NSSMYRESCKGKLSKW) lie on the Cytoplasmic side of the membrane. Residues 292-312 (FPFRLSCIVVSLILLHLFDSL) traverse the membrane as a helical segment. Over 313–320 (KPPSQTEL) the chain is Lumenal. A helical transmembrane segment spans residues 321 to 341 (IFYTLSFCKSAAVPLASVSLI). Residues 342-357 (PYCLARVFDQPDKKSL) are Cytoplasmic-facing. Positions 354 to 357 (KKSL) match the Prevents secretion from ER motif.

The protein belongs to the glucose-6-phosphatase family.

Its subcellular location is the endoplasmic reticulum membrane. The enzyme catalyses D-glucose 6-phosphate + H2O = D-glucose + phosphate. Its pathway is carbohydrate biosynthesis; gluconeogenesis. Its function is as follows. Hydrolyzes glucose-6-phosphate to glucose in the endoplasmic reticulum. Forms with the glucose-6-phosphate transporter (SLC37A4/G6PT) the complex responsible for glucose production in the terminal step of glycogenolysis and gluconeogenesis. Hence, it is the key enzyme in homeostatic regulation of blood glucose levels. The protein is Glucose-6-phosphatase catalytic subunit 1 (G6PC1) of Canis lupus familiaris (Dog).